A 247-amino-acid polypeptide reads, in one-letter code: Transmembrane protein 69 (247 aa).

The next 5 membrane-spanning stretches (helical) occupy residues 97–117 (ALCVTLAGLIPFVAPPLVMLM), 122–142 (IPILAFTQMAYGASFLSFLGG), 159–179 (YLNLASSAAPLFFSWFAFLIS), 185–205 (AIVTVIMGMGVAFHLELFLLP), and 216–236 (IVVTLLATFSFIITLVVKSSF).

Its subcellular location is the membrane. This is Transmembrane protein 69 (TMEM69) from Homo sapiens (Human).